The following is a 450-amino-acid chain: tRNA-2-methylthio-N(6)-dimethylallyladenosine synthase (450 aa).

The MTTase N-terminal domain maps to 7–127 (KKVFIKTYGC…LPDVLARVRG (121 aa)). Residues cysteine 16, cysteine 52, cysteine 90, cysteine 168, cysteine 172, and cysteine 175 each coordinate [4Fe-4S] cluster. One can recognise a Radical SAM core domain in the interval 154–388 (IKRGVTAFLT…LLLKQQQGFG (235 aa)). A TRAM domain is found at 389 to 450 (SSLVGSTIDT…GYNSLFAELA (62 aa)).

It belongs to the methylthiotransferase family. MiaB subfamily. Monomer. Requires [4Fe-4S] cluster as cofactor.

Its subcellular location is the cytoplasm. The enzyme catalyses N(6)-dimethylallyladenosine(37) in tRNA + (sulfur carrier)-SH + AH2 + 2 S-adenosyl-L-methionine = 2-methylsulfanyl-N(6)-dimethylallyladenosine(37) in tRNA + (sulfur carrier)-H + 5'-deoxyadenosine + L-methionine + A + S-adenosyl-L-homocysteine + 2 H(+). In terms of biological role, catalyzes the methylthiolation of N6-(dimethylallyl)adenosine (i(6)A), leading to the formation of 2-methylthio-N6-(dimethylallyl)adenosine (ms(2)i(6)A) at position 37 in tRNAs that read codons beginning with uridine. This Mesorhizobium japonicum (strain LMG 29417 / CECT 9101 / MAFF 303099) (Mesorhizobium loti (strain MAFF 303099)) protein is tRNA-2-methylthio-N(6)-dimethylallyladenosine synthase.